The following is a 326-amino-acid chain: Nucleoporin Nup37 (326 aa).

7 WD repeats span residues 6-54 (SRNA…FQEE), 61-109 (IQYK…LFTS), 115-154 (NEYKVLEGHTDFINGLVFDPKEGQEIASVSDDHTCRIWNL), 159-195 (TAHFVLHSPGMSVCWHPEETFKLMVAEKNGTIRFYDL), 199-237 (QAILSLESEQVPLMSAHWCLKNTFKVGAVAGNDWLIWDI), 242-282 (YPQN…QFQI), and 287-324 (HPQPILMGSVAVGSGLSWHRTLPLCVIGGDHKLLFWVT).

In terms of assembly, component of the Nup107-160 subcomplex of the nuclear pore complex (NPC). The Nup107-160 subcomplex includes NUP160, NUP133, NUP107, NUP98, NUP85, NUP43, NUP37, SEH1 and SEC13.

Its subcellular location is the chromosome. It localises to the centromere. The protein localises to the kinetochore. It is found in the nucleus. The protein resides in the nuclear pore complex. Functionally, component of the Nup107-160 subcomplex of the nuclear pore complex (NPC). The Nup107-160 subcomplex is required for the assembly of a functional NPC. The Nup107-160 subcomplex is also required for normal kinetochore microtubule attachment, mitotic progression and chromosome segregation. This chain is Nucleoporin Nup37 (NUP37), found in Homo sapiens (Human).